Here is a 496-residue protein sequence, read N- to C-terminus: Transcription factor CP2 (496 aa).

The Grh/CP2 DB domain maps to 61-300 (ENKILPFQYV…SPGFNSSHSS (240 aa)). The interval 133–386 (EHQQLEGWRW…LFNALKGRMV (254 aa)) is DNA-binding. 2 disordered regions span residues 238–268 (FKPK…YQPS) and 296–327 (SSHS…LLPT). Over residues 241-265 (KGADRKQKTDREKMEKRTPHEKEKY) the composition is skewed to basic and acidic residues.

This sequence belongs to the grh/CP2 family. CP2 subfamily. Component of the SSP (stage selector protein) complex, which appears to be a heteromer of TFCP2 and 2 copies of NFE4. In terms of tissue distribution, expressed in the epiblast at the pre-primitive streak stage. At the primitive streak stage, expressed in the extending primitive streak and in the prospective neural plate. At stages 7 and 8, expressed in the neural folds, somites and in the regressing primitive streak. At stage 12, ubiquitously expressed in the whole embryo.

The protein resides in the nucleus. Its function is as follows. Binds the B-response element 5'-CAAGTCCAGGCAAGT-3' of the ENS1/ERNI promoter. May be the major transcription activator thus being essential for its expression. This Gallus gallus (Chicken) protein is Transcription factor CP2 (TFCP2).